The chain runs to 356 residues: S-adenosylmethionine:tRNA ribosyltransferase-isomerase (356 aa).

It belongs to the QueA family. As to quaternary structure, monomer.

Its subcellular location is the cytoplasm. It catalyses the reaction 7-aminomethyl-7-carbaguanosine(34) in tRNA + S-adenosyl-L-methionine = epoxyqueuosine(34) in tRNA + adenine + L-methionine + 2 H(+). The protein operates within tRNA modification; tRNA-queuosine biosynthesis. Functionally, transfers and isomerizes the ribose moiety from AdoMet to the 7-aminomethyl group of 7-deazaguanine (preQ1-tRNA) to give epoxyqueuosine (oQ-tRNA). In Escherichia coli O81 (strain ED1a), this protein is S-adenosylmethionine:tRNA ribosyltransferase-isomerase.